The sequence spans 459 residues: C-type lectin domain family 14 member A (459 aa).

Residues 1-21 (MRPALALCLLCPAFWPRPGNG) form the signal peptide. Residues 22–386 (EHPTADRAAC…VSLTFDTSST (365 aa)) are Extracellular-facing. One can recognise a C-type lectin domain in the interval 33–173 (ASGACYSLHH…LRTDGYLCKY (141 aa)). A disulfide bridge links Cys-143 with Cys-162. N-linked (GlcNAc...) asparagine glycosylation is present at Asn-189. The 43-residue stretch at 246–288 (PCSGRYLLAGKCVELPDCLDHLGDFTCECAVGFELGKDGRSCE) folds into the EGF-like domain. N-linked (GlcNAc...) asparagine glycans are attached at residues Asn-306, Asn-317, and Asn-370. The helical transmembrane segment at 387 to 407 (VVFILVSIAVIVLVVLTITVL) threads the bilayer. The Cytoplasmic portion of the chain corresponds to 408–459 (GLFKLCFHKSRSSRTGKGALDSPGVECDAEATSLHHSSTQCTDIGVKSGTVA). Ser-440 bears the Phosphoserine mark.

The protein resides in the membrane. This is C-type lectin domain family 14 member A (Clec14a) from Mus musculus (Mouse).